The chain runs to 161 residues: Stress response protein YvgO (161 aa).

The signal sequence occupies residues methionine 1–alanine 26.

This Bacillus subtilis (strain 168) protein is Stress response protein YvgO (yvgO).